The following is a 141-amino-acid chain: Large ribosomal subunit protein uL11 (141 aa).

Belongs to the universal ribosomal protein uL11 family. As to quaternary structure, part of the ribosomal stalk of the 50S ribosomal subunit. Interacts with L10 and the large rRNA to form the base of the stalk. L10 forms an elongated spine to which L12 dimers bind in a sequential fashion forming a multimeric L10(L12)X complex. Post-translationally, one or more lysine residues are methylated.

Forms part of the ribosomal stalk which helps the ribosome interact with GTP-bound translation factors. In Streptococcus agalactiae serotype III (strain NEM316), this protein is Large ribosomal subunit protein uL11.